The following is a 128-amino-acid chain: Transcription antitermination protein NusB (128 aa).

Belongs to the NusB family.

Its function is as follows. Involved in transcription antitermination. Required for transcription of ribosomal RNA (rRNA) genes. Binds specifically to the boxA antiterminator sequence of the ribosomal RNA (rrn) operons. The protein is Transcription antitermination protein NusB of Exiguobacterium sp. (strain ATCC BAA-1283 / AT1b).